The following is a 150-amino-acid chain: Putative F-box protein At2g33655 (150 aa).

The 47-residue stretch at 1–47 (MEKMSDLPRELVEEILSRVPVKSMREVRVTCKTWNALSKHISKAEAA) folds into the F-box domain.

The protein is Putative F-box protein At2g33655 of Arabidopsis thaliana (Mouse-ear cress).